The chain runs to 386 residues: Succinate--CoA ligase [ADP-forming] subunit beta (386 aa).

One can recognise an ATP-grasp domain in the interval 9–244; the sequence is KEILRKYGVP…HDEEDPLETR (236 aa). ATP contacts are provided by residues lysine 46, 53-55, glutamate 99, cysteine 102, and glutamate 107; that span reads GRG. Residues asparagine 199 and aspartate 213 each coordinate Mg(2+). Substrate is bound by residues asparagine 264 and 321–323; that span reads GIM.

This sequence belongs to the succinate/malate CoA ligase beta subunit family. Heterotetramer of two alpha and two beta subunits. The cofactor is Mg(2+).

The enzyme catalyses succinate + ATP + CoA = succinyl-CoA + ADP + phosphate. It carries out the reaction GTP + succinate + CoA = succinyl-CoA + GDP + phosphate. The protein operates within carbohydrate metabolism; tricarboxylic acid cycle; succinate from succinyl-CoA (ligase route): step 1/1. Succinyl-CoA synthetase functions in the citric acid cycle (TCA), coupling the hydrolysis of succinyl-CoA to the synthesis of either ATP or GTP and thus represents the only step of substrate-level phosphorylation in the TCA. The beta subunit provides nucleotide specificity of the enzyme and binds the substrate succinate, while the binding sites for coenzyme A and phosphate are found in the alpha subunit. The chain is Succinate--CoA ligase [ADP-forming] subunit beta from Rickettsia prowazekii (strain Madrid E).